Reading from the N-terminus, the 581-residue chain is Probable hexosyltransferase MUCI70 (581 aa).

Residues 1–58 (MTGLGVRSSSYGSLEKTGLNGVVLPIQITTTTRTKPSKMQKDREGIVHWICKFAGRKK) are Cytoplasmic-facing. The helical; Signal-anchor for type II membrane protein transmembrane segment at 59–79 (VGMLLLFLISAVVFLRVLYVG) threads the bilayer. The Lumenal portion of the chain corresponds to 80 to 581 (KGEDSQEGQG…NLPVRLPDSA (502 aa)). Residues Asn-96, Asn-102, Asn-119, Asn-194, Asn-224, Asn-285, Asn-382, Asn-411, and Asn-488 are each glycosylated (N-linked (GlcNAc...) asparagine). Positions 514-581 (RFARQRPPVP…NLPVRLPDSA (68 aa)) are disordered. Residues 520-536 (PPVPNFPPPPPSPPPPV) are compositionally biased toward pro residues. The span at 553–571 (PPRRRGRDRRSGQRGHRKA) shows a compositional bias: basic residues.

Belongs to the glycosyltransferase 8 family. As to expression, expressed in siliques and seeds.

It localises to the golgi apparatus membrane. Its pathway is glycan metabolism; pectin biosynthesis. In terms of biological role, probable glycosyltransferase involved in pectin and/or xylans biosynthesis in cell walls. Together with IRX14, required for xylan and pectin synthesis in seed coat epidermal (SCE) cells. Collaboratively with GAUT11, essential for the accumulation of seed mucilage, a gelatinous wall rich in unbranched rhamnogalacturonan I (RG I), and for shaping the surface morphology of seeds. This chain is Probable hexosyltransferase MUCI70, found in Arabidopsis thaliana (Mouse-ear cress).